The sequence spans 408 residues: Imidazolonepropionase (408 aa).

Residues His-73 and His-75 each contribute to the Fe(3+) site. Positions 73 and 75 each coordinate Zn(2+). Residues Arg-82, Tyr-145, and His-178 each contribute to the 4-imidazolone-5-propanoate site. Tyr-145 contacts N-formimidoyl-L-glutamate. His-243 contacts Fe(3+). Residue His-243 participates in Zn(2+) binding. Residue Gln-246 participates in 4-imidazolone-5-propanoate binding. Position 318 (Asp-318) interacts with Fe(3+). Position 318 (Asp-318) interacts with Zn(2+). 2 residues coordinate N-formimidoyl-L-glutamate: Asn-320 and Gly-322. 4-imidazolone-5-propanoate is bound at residue Ser-323.

It belongs to the metallo-dependent hydrolases superfamily. HutI family. Requires Zn(2+) as cofactor. The cofactor is Fe(3+).

The protein resides in the cytoplasm. The enzyme catalyses 4-imidazolone-5-propanoate + H2O = N-formimidoyl-L-glutamate. The protein operates within amino-acid degradation; L-histidine degradation into L-glutamate; N-formimidoyl-L-glutamate from L-histidine: step 3/3. Catalyzes the hydrolytic cleavage of the carbon-nitrogen bond in imidazolone-5-propanoate to yield N-formimidoyl-L-glutamate. It is the third step in the universal histidine degradation pathway. This chain is Imidazolonepropionase, found in Shewanella putrefaciens (strain CN-32 / ATCC BAA-453).